The chain runs to 368 residues: Trans-enoyl reductase TwmE (368 aa).

Ser49–Lys52 contributes to the NADP(+) binding site. Phe135 to Thr142 contacts substrate. NADP(+)-binding positions include Ser204 to Ser207, Tyr222, and Leu269 to Glu270. A substrate-binding site is contributed by Ser290–Tyr294. His360–Pro361 is a binding site for NADP(+).

The protein belongs to the zinc-containing alcohol dehydrogenase family. Monomer.

The protein operates within secondary metabolite biosynthesis. Functionally, trans-enoyl reductase; part of the gene cluster that mediates the biosynthesis of wortmanamides A and B, reduced long-chain polyketides amidated with a specific omega-amino acid, 5-aminopentanoic acid (5PA). The PKS modules of TwmB are involved in the synthesis of the polyketide backbone, whereas the non-canonical C domain of TwmB is a bonafide condensation domain that specifically selects 5PA and catalyzes amidation to release polyketide chain. The C domain clearly prefers C16 and C18 fatty acyl substrates, which is consistent with simultaneous formation of both octaketide and nonaketide acyl amides wortmanamides A and B. Because TwmB lacks a designated enoylreductase (ER) domain, the required activity is provided the enoyl reductase TwmE. The roles of the remaining enzymes have still to be clarified. This Talaromyces wortmannii (Penicillium wortmannii) protein is Trans-enoyl reductase TwmE.